We begin with the raw amino-acid sequence, 145 residues long: D-aminoacyl-tRNA deacylase (145 aa).

Residues glycine 137–proline 138 carry the Gly-cisPro motif, important for rejection of L-amino acids motif.

The protein belongs to the DTD family. Homodimer.

The protein resides in the cytoplasm. It carries out the reaction glycyl-tRNA(Ala) + H2O = tRNA(Ala) + glycine + H(+). The catalysed reaction is a D-aminoacyl-tRNA + H2O = a tRNA + a D-alpha-amino acid + H(+). In terms of biological role, an aminoacyl-tRNA editing enzyme that deacylates mischarged D-aminoacyl-tRNAs. Also deacylates mischarged glycyl-tRNA(Ala), protecting cells against glycine mischarging by AlaRS. Acts via tRNA-based rather than protein-based catalysis; rejects L-amino acids rather than detecting D-amino acids in the active site. By recycling D-aminoacyl-tRNA to D-amino acids and free tRNA molecules, this enzyme counteracts the toxicity associated with the formation of D-aminoacyl-tRNA entities in vivo and helps enforce protein L-homochirality. The sequence is that of D-aminoacyl-tRNA deacylase from Salmonella choleraesuis (strain SC-B67).